We begin with the raw amino-acid sequence, 276 residues long: Mitochondrial outer membrane protein porin of 34 kDa (276 aa).

This sequence belongs to the eukaryotic mitochondrial porin (TC 1.B.8.1) family.

The protein localises to the mitochondrion outer membrane. In terms of biological role, forms a channel through the cell membrane that allows diffusion of small hydrophilic molecules. The channel adopts an open conformation at low or zero membrane potential and a closed conformation at potentials above 30-40 mV. The open state has a weak anion selectivity whereas the closed state is cation-selective. This chain is Mitochondrial outer membrane protein porin of 34 kDa, found in Solanum tuberosum (Potato).